The sequence spans 890 residues: Leucine--tRNA ligase (890 aa).

The short motif at 48–58 (PYPSGKLHMGH) is the 'HIGH' region element. The short motif at 645–649 (KMSKS) is the 'KMSKS' region element. An ATP-binding site is contributed by K648.

This sequence belongs to the class-I aminoacyl-tRNA synthetase family.

The protein localises to the cytoplasm. The catalysed reaction is tRNA(Leu) + L-leucine + ATP = L-leucyl-tRNA(Leu) + AMP + diphosphate. The protein is Leucine--tRNA ligase of Polynucleobacter asymbioticus (strain DSM 18221 / CIP 109841 / QLW-P1DMWA-1) (Polynucleobacter necessarius subsp. asymbioticus).